Here is a 56-residue protein sequence, read N- to C-terminus: UPF0434 protein CbuG_1535 (56 aa).

It belongs to the UPF0434 family.

This Coxiella burnetii (strain CbuG_Q212) (Coxiella burnetii (strain Q212)) protein is UPF0434 protein CbuG_1535.